The sequence spans 467 residues: ATP synthase subunit beta, chloroplastic (467 aa).

An ATP-binding site is contributed by 149-156; the sequence is GGAGVGKT.

The protein belongs to the ATPase alpha/beta chains family. As to quaternary structure, F-type ATPases have 2 components, CF(1) - the catalytic core - and CF(0) - the membrane proton channel. CF(1) has five subunits: alpha(3), beta(3), gamma(1), delta(1), epsilon(1). CF(0) has four main subunits: a(1), b(1), b'(1) and c(9-12).

It is found in the plastid. It localises to the chloroplast thylakoid membrane. The enzyme catalyses ATP + H2O + 4 H(+)(in) = ADP + phosphate + 5 H(+)(out). Produces ATP from ADP in the presence of a proton gradient across the membrane. The catalytic sites are hosted primarily by the beta subunits. This chain is ATP synthase subunit beta, chloroplastic, found in Cyanidioschyzon merolae (strain NIES-3377 / 10D) (Unicellular red alga).